Reading from the N-terminus, the 148-residue chain is MQQKRREPVQAVQVFGRKKTATAVAYCKRGNGLLKVNGRPLEQIEPKVLQYKLQEPLLLLGKEKFAGVDIRVRVSGGGHVAQIYAIRQAISKALVAFYQKYVDEASKKEIKDILVQYDRTLLVGDPRRCEPKKFGGPGARARYQKSYR.

The protein belongs to the universal ribosomal protein uS9 family.

The chain is Small ribosomal subunit protein uS9 (RpS16) from Drosophila melanogaster (Fruit fly).